A 359-amino-acid chain; its full sequence is MKQSIRDKLELLTHRLAELDRELSSGDAVRDMDGFRSLGRERAEIEPVVALYGAYRQAEADCESARAMLADAEMRELAESELETGAVRLQALEAELQCALLPCDPSDERNLFLEVRAGTGGDEASLFAGDLLRMYTRYAERQRWKVEIVSSSPSDLGGYKEVILRIAGAGAYSKLKFESGGHRVQRIPVTETQGRIHTSACTVAVMPEADEVEAVNINPADLRIDTFRASGAGGQHINKTDSAVRITHLPTGIVVECQDDRSQHRNRAQAMSVLAARIQDRQLREQQAREAATRKSLVGSGDRSERIRTYNYPQGRVTDHRINLTLYKLDAVMQGDLDELVDALTREHQADQLAALGGG.

Gln-235 is modified (N5-methylglutamine).

This sequence belongs to the prokaryotic/mitochondrial release factor family. In terms of processing, methylated by PrmC. Methylation increases the termination efficiency of RF1.

It localises to the cytoplasm. Functionally, peptide chain release factor 1 directs the termination of translation in response to the peptide chain termination codons UAG and UAA. This is Peptide chain release factor 1 from Aromatoleum aromaticum (strain DSM 19018 / LMG 30748 / EbN1) (Azoarcus sp. (strain EbN1)).